The following is a 346-amino-acid chain: 3-dehydroquinate synthase (346 aa).

NAD(+)-binding positions include 62 to 67, 96 to 100, 120 to 121, K133, and K142; these read DGEQYK, GVISD, and TT. Zn(2+) contacts are provided by E175, H234, and H251.

Belongs to the sugar phosphate cyclases superfamily. Dehydroquinate synthase family. Requires Co(2+) as cofactor. The cofactor is Zn(2+). It depends on NAD(+) as a cofactor.

The protein localises to the cytoplasm. The enzyme catalyses 7-phospho-2-dehydro-3-deoxy-D-arabino-heptonate = 3-dehydroquinate + phosphate. The protein operates within metabolic intermediate biosynthesis; chorismate biosynthesis; chorismate from D-erythrose 4-phosphate and phosphoenolpyruvate: step 2/7. In terms of biological role, catalyzes the conversion of 3-deoxy-D-arabino-heptulosonate 7-phosphate (DAHP) to dehydroquinate (DHQ). This Campylobacter fetus subsp. fetus (strain 82-40) protein is 3-dehydroquinate synthase.